Consider the following 410-residue polypeptide: MGLWLVLANQVGLVGTLVLVVCFTPANSLVRPLLLPGITALVSYGLILNKEAIANAGAWSLVNLNTAGLFLQYLDVGLISRWTYSAYGPTSSRGGQPNASLDLAGRKKPPSSSLLSRLQWGFSTATSWRAPSTVWEAKGTPHFEELPSRGRFLARNAMTLLWSVLVLDVMGLVGGDLDPVANAAHFTWDRVRFLARLGDVSRDEVILRATVVYMRWGAMYFSLQVVYSFLAIVFVMVGLSPVQRWPPLFGSFTEIYTLRNTWGKAWHQLIRQKVSSPAHYTTYSLLGLRKGGIAGRYTCILATFFVSGLLHLFCAEYSYGIQWDQSGTLRFYSIQALGIAMEDAVQATSRRLFAYRSTYWTRAIGYVWVLLWFLWTSPAYFFPLLKYDTEKRPPVLLGPIETWLQSRHVQ.

The next 3 helical transmembrane spans lie at 3–23 (LWLV…VVCF), 28–48 (SLVR…GLIL), and 59–79 (WSLV…VGLI). A compositionally biased stretch (polar residues) spans 90–99 (TSSRGGQPNA). The disordered stretch occupies residues 90–112 (TSSRGGQPNASLDLAGRKKPPSS). An N-linked (GlcNAc...) asparagine glycan is attached at N98. Helical transmembrane passes span 157–177 (AMTL…GGDL), 219–239 (MYFS…MVGL), 300–320 (ILAT…YSYG), and 364–384 (IGYV…FFPL).

This sequence belongs to the wax synthase family.

It localises to the membrane. Its pathway is polyketide biosynthesis. Its function is as follows. Acetyltransferase; part of the gene cluster that mediates the biosynthesis of aurovertins, fungal polyketides that exhibit potent inhibition of adenosine triphosphate synthase. Tha biosynthesis starts with the HR-PKS aurA that selects propionate as the starter unit; synthesizes a hexa-ene chain through the repeated functions of the KR and DH domains in the first six iterations; selectively introduces three alpha-methyl substitutions at C4, C6, and C16 using the S-adensylmethionine-dependent cMET; and shuts off KR and DH in the last three iterations to afford a 1,3,5-triketo portion that can undergo intramolecular cyclization to yield the alpha-pyrone intermediate. AurE may act as a cyclase and enhances the rate of pyrone formation and product release of aurA. The methyltransferase aurB then methylates the C17 hydroxyl group. C17 methylation is required to initiate epoxidation by the downstream monooxygenase aurC. The monooxygenase aurC and the epoxide hydrolase aurD can iteratively transform the terminal triene portion of the methylated precursor into the dioxabicyclo[3.2.1]octane scaffold of aurovertin E. Epoxidation modifications of the precursor occur in two separate steps; bis-epoxidation of the two terminal olefins takes place first, followed by another epoxidation that occurs at C7-C8 after tetrahydrofuran formation. The O-acyltransferase aurG converts aurovertin E to aurovertin A. The protein is Acetyltransferase aurG of Calcarisporium arbuscula (Dendryphion arbuscula).